We begin with the raw amino-acid sequence, 283 residues long: Non-selective voltage-gated ion channel VDAC3 (283 aa).

Cysteine 2 carries the N-acetylcysteine modification. Threonine 4 bears the Phosphothreonine mark. Lysine 12, lysine 15, and lysine 20 each carry N6-acetyllysine. The next 2 beta stranded transmembrane spans lie at 26 to 35 (MVKIDLRTKS) and 39 to 47 (VEFSTSGHA). Lysine 53 is covalently cross-linked (Glycyl lysine isopeptide (Lys-Gly) (interchain with G-Cter in ubiquitin)). A run of 3 beta stranded transmembrane segments spans residues 54–64 (ASGNLETKYKI), 69–76 (LTFTQKWN), and 80–89 (TLGTEISWEN). Lysine 90 is subject to N6-acetyllysine. Residues 95–104 (LKLTLDTIFV) traverse the membrane as a beta stranded segment. Glycyl lysine isopeptide (Lys-Gly) (interchain with G-Cter in ubiquitin) cross-links involve residues lysine 109 and lysine 110. 10 beta stranded membrane-spanning segments follow: residues 111 to 120 (SGKLKASYKR), 123 to 130 (FSLGSNVD), 137 to 145 (TIYGWAVLA), 150 to 158 (LAGYQMSFD), 163 to 175 (KLSQNNFALGYKA), 178 to 185 (FQLHTHVN), 189 to 198 (EFGGSIYQKV), 202 to 211 (IETSINLAWT), 218 to 227 (RFGIAAKYKL), and 231 to 238 (TSLSAKVN). Residue serine 241 is modified to Phosphoserine. NAD(+) contacts are provided by residues 242 to 244 (LIG) and 260 to 264 (SALID). Transmembrane regions (beta stranded) follow at residues 242-251 (LIGLGYTQTL) and 254-263 (GVKLTLSALI). Position 266 is an N6-acetyllysine; alternate (lysine 266). A Glycyl lysine isopeptide (Lys-Gly) (interchain with G-Cter in ubiquitin); alternate cross-link involves residue lysine 266. The chain crosses the membrane as a beta stranded span at residues 273-282 (HKVGLGFELE).

The protein belongs to the eukaryotic mitochondrial porin family. In terms of assembly, interacts with ARMC12 in a TBC1D21-dependent manner. Interacts with MISFA. In terms of processing, ubiquitinated by PRKN during mitophagy, leading to its degradation and enhancement of mitophagy. Deubiquitinated by USP30.

The protein resides in the mitochondrion outer membrane. The protein localises to the membrane. It carries out the reaction chloride(in) = chloride(out). The catalysed reaction is K(+)(in) = K(+)(out). In terms of biological role, non-selective voltage-gated ion channel that mediates the transport of anions and cations through the mitochondrion outer membrane and plasma membrane. Forms a high-conducting channel with a stable open state and a voltage-induced closure with a mild preference for anions over cations. Involved in male fertility and sperm mitochondrial sheath formation. The chain is Non-selective voltage-gated ion channel VDAC3 from Bos taurus (Bovine).